The sequence spans 85 residues: Small ribosomal subunit protein uS17 (85 aa).

The protein belongs to the universal ribosomal protein uS17 family. Part of the 30S ribosomal subunit.

Functionally, one of the primary rRNA binding proteins, it binds specifically to the 5'-end of 16S ribosomal RNA. This chain is Small ribosomal subunit protein uS17, found in Spiroplasma citri.